A 104-amino-acid chain; its full sequence is Large ribosomal subunit protein uL24 (104 aa).

This sequence belongs to the universal ribosomal protein uL24 family. Part of the 50S ribosomal subunit.

Its function is as follows. One of two assembly initiator proteins, it binds directly to the 5'-end of the 23S rRNA, where it nucleates assembly of the 50S subunit. In terms of biological role, one of the proteins that surrounds the polypeptide exit tunnel on the outside of the subunit. This Shewanella loihica (strain ATCC BAA-1088 / PV-4) protein is Large ribosomal subunit protein uL24.